Consider the following 545-residue polypeptide: Sulfite oxidase, mitochondrial (545 aa).

The transit peptide at 1–79 directs the protein to the mitochondrion; sequence MLLLHRAVVL…YQDHRCRAAQ (79 aa). Residues 82 to 161 form the Cytochrome b5 heme-binding domain; that stretch reads TRIYTKEEVS…LAQYKVGELN (80 aa). Histidine 118 lines the heme b pocket. A Phosphoserine modification is found at serine 123. 3 residues coordinate heme b: histidine 143, glutamine 145, and histidine 147. The segment at 165–174 is hinge; sequence KVAPTVETSD. Positions 175 to 401 are moco domain; the sequence is PYADDPVRHP…YSHWQRRDYK (227 aa). Residues 215–219, cysteine 264, aspartate 322, histidine 361, arginine 366, and 377–379 each bind Mo-molybdopterin; these read FTRNH and HVK. Residues 402–538 form a homodimerization region; sequence GFSPSVDWDT…RGVLSNAWHR (137 aa).

As to quaternary structure, homodimer. Requires heme b as cofactor. Mo-molybdopterin serves as cofactor.

It localises to the mitochondrion intermembrane space. It carries out the reaction sulfite + O2 + H2O = sulfate + H2O2. Its pathway is energy metabolism; sulfur metabolism. Functionally, catalyzes the oxidation of sulfite to sulfate, the terminal reaction in the oxidative degradation of sulfur-containing amino acids. The chain is Sulfite oxidase, mitochondrial (SUOX) from Macaca fascicularis (Crab-eating macaque).